Reading from the N-terminus, the 144-residue chain is Large ribosomal subunit protein uL16 (144 aa).

Residues 1–16 (MLQPKKTKFRRQQKGR) are compositionally biased toward basic residues. Residues 1–22 (MLQPKKTKFRRQQKGRMKGEAQ) form a disordered region.

This sequence belongs to the universal ribosomal protein uL16 family. As to quaternary structure, part of the 50S ribosomal subunit.

In terms of biological role, binds 23S rRNA and is also seen to make contacts with the A and possibly P site tRNAs. This is Large ribosomal subunit protein uL16 from Parabacteroides distasonis (strain ATCC 8503 / DSM 20701 / CIP 104284 / JCM 5825 / NCTC 11152).